The chain runs to 123 residues: Small ribosomal subunit protein uS12 (123 aa).

D89 carries the 3-methylthioaspartic acid modification.

Belongs to the universal ribosomal protein uS12 family. In terms of assembly, part of the 30S ribosomal subunit. Contacts proteins S8 and S17. May interact with IF1 in the 30S initiation complex.

With S4 and S5 plays an important role in translational accuracy. In terms of biological role, interacts with and stabilizes bases of the 16S rRNA that are involved in tRNA selection in the A site and with the mRNA backbone. Located at the interface of the 30S and 50S subunits, it traverses the body of the 30S subunit contacting proteins on the other side and probably holding the rRNA structure together. The combined cluster of proteins S8, S12 and S17 appears to hold together the shoulder and platform of the 30S subunit. The polypeptide is Small ribosomal subunit protein uS12 (Rhizobium etli (strain ATCC 51251 / DSM 11541 / JCM 21823 / NBRC 15573 / CFN 42)).